The sequence spans 280 residues: Putative pyruvate, phosphate dikinase regulatory protein (280 aa).

153 to 160 (GISRTSKT) contacts ADP.

Belongs to the pyruvate, phosphate/water dikinase regulatory protein family. PDRP subfamily.

The enzyme catalyses N(tele)-phospho-L-histidyl/L-threonyl-[pyruvate, phosphate dikinase] + ADP = N(tele)-phospho-L-histidyl/O-phospho-L-threonyl-[pyruvate, phosphate dikinase] + AMP + H(+). It carries out the reaction N(tele)-phospho-L-histidyl/O-phospho-L-threonyl-[pyruvate, phosphate dikinase] + phosphate + H(+) = N(tele)-phospho-L-histidyl/L-threonyl-[pyruvate, phosphate dikinase] + diphosphate. Functionally, bifunctional serine/threonine kinase and phosphorylase involved in the regulation of the pyruvate, phosphate dikinase (PPDK) by catalyzing its phosphorylation/dephosphorylation. The sequence is that of Putative pyruvate, phosphate dikinase regulatory protein from Bartonella quintana (strain Toulouse) (Rochalimaea quintana).